The chain runs to 529 residues: Lanosterol 14-alpha demethylase (529 aa).

Residue C468 coordinates heme.

Belongs to the cytochrome P450 family. Heme serves as cofactor.

It localises to the membrane. It carries out the reaction a 14alpha-methyl steroid + 3 reduced [NADPH--hemoprotein reductase] + 3 O2 = a Delta(14) steroid + formate + 3 oxidized [NADPH--hemoprotein reductase] + 4 H2O + 4 H(+). The enzyme catalyses a 14alpha-methyl steroid + reduced [NADPH--hemoprotein reductase] + O2 = a 14alpha-hydroxymethyl steroid + oxidized [NADPH--hemoprotein reductase] + H2O + H(+). The catalysed reaction is a 14alpha-hydroxymethyl steroid + reduced [NADPH--hemoprotein reductase] + O2 = a 14alpha-formyl steroid + oxidized [NADPH--hemoprotein reductase] + 2 H2O + H(+). It catalyses the reaction a 14alpha-formyl steroid + reduced [NADPH--hemoprotein reductase] + O2 = a Delta(14) steroid + formate + oxidized [NADPH--hemoprotein reductase] + H2O + 2 H(+). It carries out the reaction lanosterol + 3 reduced [NADPH--hemoprotein reductase] + 3 O2 = 4,4-dimethyl-5alpha-cholesta-8,14,24-trien-3beta-ol + formate + 3 oxidized [NADPH--hemoprotein reductase] + 4 H2O + 4 H(+). The enzyme catalyses lanosterol + reduced [NADPH--hemoprotein reductase] + O2 = 32-hydroxylanosterol + oxidized [NADPH--hemoprotein reductase] + H2O + H(+). The catalysed reaction is 32-hydroxylanosterol + reduced [NADPH--hemoprotein reductase] + O2 = 32-oxolanosterol + oxidized [NADPH--hemoprotein reductase] + 2 H2O + H(+). It catalyses the reaction 32-oxolanosterol + reduced [NADPH--hemoprotein reductase] + O2 = 4,4-dimethyl-5alpha-cholesta-8,14,24-trien-3beta-ol + formate + oxidized [NADPH--hemoprotein reductase] + H2O + 2 H(+). It carries out the reaction eburicol + 3 reduced [NADPH--hemoprotein reductase] + 3 O2 = 14-demethyleburicol + formate + 3 oxidized [NADPH--hemoprotein reductase] + 4 H2O + 4 H(+). The enzyme catalyses eburicol + reduced [NADPH--hemoprotein reductase] + O2 = 32-hydroxyeburicol + oxidized [NADPH--hemoprotein reductase] + H2O + H(+). The catalysed reaction is 32-hydroxyeburicol + reduced [NADPH--hemoprotein reductase] + O2 = 32-oxoeburicol + oxidized [NADPH--hemoprotein reductase] + 2 H2O + H(+). It catalyses the reaction 32-oxoeburicol + reduced [NADPH--hemoprotein reductase] + O2 = 14-demethyleburicol + formate + oxidized [NADPH--hemoprotein reductase] + H2O + 2 H(+). It participates in steroid biosynthesis; zymosterol biosynthesis; zymosterol from lanosterol: step 1/6. Its function is as follows. Sterol 14alpha-demethylase that plays a critical role in the third module of ergosterol biosynthesis pathway, being ergosterol the major sterol component in fungal membranes that participates in a variety of functions. The third module or late pathway involves the ergosterol synthesis itself through consecutive reactions that mainly occur in the endoplasmic reticulum (ER) membrane. In filamentous fungi, during the initial step of this module, lanosterol (lanosta-8,24-dien-3beta-ol) can be metabolized to eburicol. Sterol 14alpha-demethylase catalyzes the three-step oxidative removal of the 14alpha-methyl group (C-32) of both these sterols in the form of formate, and converts eburicol and lanosterol to 14-demethyleburicol (4,4,24-trimethylergosta-8,14,24(28)-trienol) and 4,4-dimethyl-5alpha-cholesta-8,14,24-trien-3beta-ol, respectively, which are further metabolized by other enzymes in the pathway to ergosterol. Can also use substrates not intrinsic to fungi, such as 24,25-dihydrolanosterol (DHL), producing 4,4-dimethyl-8,14-cholestadien-3-beta-ol, but at lower rates than the endogenous substrates. In Eremothecium gossypii (strain ATCC 10895 / CBS 109.51 / FGSC 9923 / NRRL Y-1056) (Yeast), this protein is Lanosterol 14-alpha demethylase (ERG11).